A 525-amino-acid polypeptide reads, in one-letter code: GMP synthase [glutamine-hydrolyzing] (525 aa).

Positions 13–202 (TILVLDFGSQ…AVDLCHAKQN (190 aa)) constitute a Glutamine amidotransferase type-1 domain. The Nucleophile role is filled by cysteine 89. Active-site residues include histidine 176 and glutamate 178. Residues 203 to 400 (WTMENFIDTE…LGIPHDLVWR (198 aa)) form the GMPS ATP-PPase domain. Position 231-237 (231-237 (SGGVDST)) interacts with ATP. A Glycyl lysine isopeptide (Lys-Gly) (interchain with G-Cter in ubiquitin) cross-link involves residue lysine 241. XMP is bound at residue arginine 304. Lysine 426 participates in a covalent cross-link: Glycyl lysine isopeptide (Lys-Gly) (interchain with G-Cter in ubiquitin). Residues aspartate 462, lysine 517, and glutamate 523 each coordinate XMP.

Homodimer. It depends on Mg(2+) as a cofactor.

Its subcellular location is the cytoplasm. The protein resides in the cytosol. The catalysed reaction is XMP + L-glutamine + ATP + H2O = GMP + L-glutamate + AMP + diphosphate + 2 H(+). Its pathway is purine metabolism; GMP biosynthesis; GMP from XMP (L-Gln route): step 1/1. Functionally, catalyzes the conversion of xanthine monophosphate (XMP) to GMP in the presence of glutamine and ATP through an adenyl-XMP intermediate. The protein is GMP synthase [glutamine-hydrolyzing] of Saccharomyces cerevisiae (strain ATCC 204508 / S288c) (Baker's yeast).